The chain runs to 804 residues: Phosphatidylinositol 4-kinase beta (804 aa).

The PIK helical domain occupies 55–245 (LEKVKMIHGS…GTKLRKLILS (191 aa)). Disordered stretches follow at residues 69–122 (LDKV…ARRR) and 251–309 (AHKK…EPVR). 2 stretches are compositionally biased toward polar residues: residues 91–103 (KLTN…TSSR) and 281–300 (DATV…SNPK). Positions 523-789 (EPWEEKVRRI…MVDGSMRSIT (267 aa)) constitute a PI3K/PI4K catalytic domain. The G-loop stretch occupies residues 529 to 535 (VRRIREG). The tract at residues 656-664 (QVKDRHNGN) is catalytic loop. An activation loop region spans residues 675 to 699 (HIDFGFILSSSPRNLGFETSAFKLT).

This sequence belongs to the PI3/PI4-kinase family. Type III PI4K subfamily. Mg(2+) serves as cofactor. The cofactor is Mn(2+).

The protein localises to the endomembrane system. It localises to the mitochondrion outer membrane. Its subcellular location is the rough endoplasmic reticulum membrane. The catalysed reaction is a 1,2-diacyl-sn-glycero-3-phospho-(1D-myo-inositol) + ATP = a 1,2-diacyl-sn-glycero-3-phospho-(1D-myo-inositol 4-phosphate) + ADP + H(+). Its function is as follows. Phosphorylates phosphatidylinositol (PI) in the first committed step in the production of the second messenger inositol-1,4,5,-trisphosphate (PIP). May play an important role in the inner ear development. The protein is Phosphatidylinositol 4-kinase beta (pi4kb) of Xenopus laevis (African clawed frog).